Consider the following 307-residue polypeptide: uncharacterized protein (307 aa).

This is an uncharacterized protein from Rickettsia conorii (strain ATCC VR-613 / Malish 7).